Here is a 550-residue protein sequence, read N- to C-terminus: MFCVQCEQTIRTPVGNGCSYAQGMCGKTAETSDLQDLLVAVLQGLSAWALKARELDIIDHDVDNFAPRAFFSTLTNVNFDSQRIIGYAQEAITLRESLAVRCRLHDATATVDHPMAALQLAGNDIPTLLQQAADFALDSDKAIVGDDVHGLRMLNLYGLKGAAAYMEHAHVLGQYDDAIYAEYHAFMAWLGTQPSDVDTLLNNAMGIGKMNFNVMAILDRGETDAYGNPQPTAVNVRPIAGKAILISGHDLKDLRMLLEQTEGTGVNIYTHGEMLPAHGYPELKKFKHLAGNYGSGWQNQQTEFAKFPGAIVMTSNCIIDPNVGNYGDRIWTRSIVGWPGVNHLEGDDFSPVIEQAQSLAGFPYSEIEHMITVGFGRETLLSAADTVIDLVAQKKLRHVFLVGGCDGSREERSYFTDFTLNVPQDCLIMTLACGKYRFNKLDFGTLEGLPRLLDVGQCNDAYSAIILAVKLAEKLGCGVNDLPLSLVLSWFEQKAIVILLTLLSLGVKNIYTGPTAPGFLTDNLLAILNEKFGMRAITTVEQDMNTILAA.

[2Fe-2S] cluster-binding residues include Cys-3, Cys-6, Cys-18, and Cys-25. Positions 249, 273, 317, 405, 433, 458, 492, and 494 each coordinate hybrid [4Fe-2O-2S] cluster. Position 405 is a cysteine persulfide (Cys-405).

The protein belongs to the HCP family. It depends on [2Fe-2S] cluster as a cofactor. The cofactor is hybrid [4Fe-2O-2S] cluster.

Its subcellular location is the cytoplasm. It carries out the reaction A + NH4(+) + H2O = hydroxylamine + AH2 + H(+). In terms of biological role, catalyzes the reduction of hydroxylamine to form NH(3) and H(2)O. The protein is Hydroxylamine reductase of Pectobacterium carotovorum subsp. carotovorum (strain PC1).